A 597-amino-acid polypeptide reads, in one-letter code: ATP-dependent lipid A-core flippase (597 aa).

A run of 6 helical transmembrane segments spans residues 26–46 (LWPYIKPLIWVLIGAIVAMAV), 76–96 (WFVPAAVIGLALIRSLSQYAS), 138–158 (AIVFEVNQILNVLLSVLVTLV), 164–184 (VVFLLGYLFYLNWRLTLIVAV), 263–283 (QPLTQFLASIALAVVITIAVV), and 292–312 (VGGFVAFVTSMLLIISPLKHL). The region spanning 38–321 (IGAIVAMAVS…LMDVNQPLQR (284 aa)) is the ABC transmembrane type-1 domain. One can recognise an ABC transporter domain in the interval 353–590 (VEFRDVSFVY…DGLYAHLHRI (238 aa)). An ATP-binding site is contributed by 390-397 (GPSGSGKT).

Belongs to the ABC transporter superfamily. Lipid exporter (TC 3.A.1.106) family. Homodimer.

The protein localises to the cell inner membrane. It carries out the reaction ATP + H2O + lipid A-core oligosaccharideSide 1 = ADP + phosphate + lipid A-core oligosaccharideSide 2.. Involved in lipopolysaccharide (LPS) biosynthesis. Translocates lipid A-core from the inner to the outer leaflet of the inner membrane. Transmembrane domains (TMD) form a pore in the inner membrane and the ATP-binding domain (NBD) is responsible for energy generation. In Paraburkholderia xenovorans (strain LB400), this protein is ATP-dependent lipid A-core flippase.